A 125-amino-acid polypeptide reads, in one-letter code: Small ribosomal subunit protein uS12 (125 aa).

Asp89 carries the post-translational modification 3-methylthioaspartic acid.

Belongs to the universal ribosomal protein uS12 family. Part of the 30S ribosomal subunit. Contacts proteins S8 and S17. May interact with IF1 in the 30S initiation complex.

With S4 and S5 plays an important role in translational accuracy. In terms of biological role, interacts with and stabilizes bases of the 16S rRNA that are involved in tRNA selection in the A site and with the mRNA backbone. Located at the interface of the 30S and 50S subunits, it traverses the body of the 30S subunit contacting proteins on the other side and probably holding the rRNA structure together. The combined cluster of proteins S8, S12 and S17 appears to hold together the shoulder and platform of the 30S subunit. The sequence is that of Small ribosomal subunit protein uS12 from Bordetella avium (strain 197N).